The following is a 217-amino-acid chain: ATP-dependent Clp protease proteolytic subunit (217 aa).

The active-site Nucleophile is the Ser-121. Residue His-146 is part of the active site.

The protein belongs to the peptidase S14 family. Fourteen ClpP subunits assemble into 2 heptameric rings which stack back to back to give a disk-like structure with a central cavity, resembling the structure of eukaryotic proteasomes.

The protein localises to the cytoplasm. It carries out the reaction Hydrolysis of proteins to small peptides in the presence of ATP and magnesium. alpha-casein is the usual test substrate. In the absence of ATP, only oligopeptides shorter than five residues are hydrolyzed (such as succinyl-Leu-Tyr-|-NHMec, and Leu-Tyr-Leu-|-Tyr-Trp, in which cleavage of the -Tyr-|-Leu- and -Tyr-|-Trp bonds also occurs).. In terms of biological role, cleaves peptides in various proteins in a process that requires ATP hydrolysis. Has a chymotrypsin-like activity. Plays a major role in the degradation of misfolded proteins. This Burkholderia lata (strain ATCC 17760 / DSM 23089 / LMG 22485 / NCIMB 9086 / R18194 / 383) protein is ATP-dependent Clp protease proteolytic subunit.